The sequence spans 210 residues: Large ribosomal subunit protein uL3 (210 aa).

The interval 139–165 (AEKVHRSPGSIGHATFPGKVFKGKKMP) is disordered.

The protein belongs to the universal ribosomal protein uL3 family. As to quaternary structure, part of the 50S ribosomal subunit. Forms a cluster with proteins L14 and L19.

One of the primary rRNA binding proteins, it binds directly near the 3'-end of the 23S rRNA, where it nucleates assembly of the 50S subunit. In Maridesulfovibrio salexigens (strain ATCC 14822 / DSM 2638 / NCIMB 8403 / VKM B-1763) (Desulfovibrio salexigens), this protein is Large ribosomal subunit protein uL3.